Consider the following 483-residue polypeptide: MSDDLSKRSLRELVSQPYKYGFHTDIENEEFPKGLDEDIIKEISKLKCEPSYMLDFRLKSYILWKKMSLPEWACLTYLNINYQDIVYYSAPKNSTKLDSLEDVDKKILETFDKLGIPLNEQKKLANVAVDAIFDSVSVGTTFKQELSNVGVLFCPLSEATNKYSTLVEKYLGSVVPIGDNYFAALNSAVFSEGSFCYIPPNVKCPLELSTYFRINNENSGQFERTLIIADFNSYVSYLEGCTAPMYDKNQLHAAVVELIALENAEIRYSTVQNWYSGDTNGKGGIYNFVTKRGLCAGKSSKISWTQVETGSAITWKYPSCILVGEDSVGEFYSVALTNNYQQADTGTKMIHVGRGSKSRIISKGISAGYSKNTYRGQVKININALGSINNSQCDSMLIGPYSQANTYPYIQVSNAMSRVEHEASTSKIEEEQLFYFLQRGISVEQAISLLISGFCRDVFVKLPMEFAVEADKLLSVKLEGTVG.

This sequence belongs to the iron-sulfur cluster assembly SufBD family.

The protein resides in the plastid. It is found in the chloroplast. The sequence is that of Iron-sulfur cluster assembly SufBD family protein ycf24 (ycf24) from Guillardia theta (Cryptophyte).